The chain runs to 128 residues: uncharacterized protein (128 aa).

This is an uncharacterized protein from Methanocaldococcus jannaschii (strain ATCC 43067 / DSM 2661 / JAL-1 / JCM 10045 / NBRC 100440) (Methanococcus jannaschii).